The following is a 424-amino-acid chain: Tubulin-specific chaperone cofactor E-like protein (424 aa).

Residues Ser-18 and Ser-41 each carry the phosphoserine modification. LRR repeat units follow at residues 73 to 98 (CAHV…IVSN), 99 to 123 (VPQL…TCAG), 124 to 147 (SFSG…HMIL), 150 to 172 (LPDL…PSIC), 173 to 197 (CHSL…KLGV), 199 to 224 (FPSL…SLAR), and 226 to 250 (FPNL…KLNS). The LRRCT domain occupies 262–303 (IPLLQPYTTEERRKLVIARLPSVSKLNGSVVTDGEREDSERF). The 91-residue stretch at 334–424 (AEVDLRPQSS…DKIYVESKTK (91 aa)) folds into the Ubiquitin-like domain. Positions 349–375 (HFNDQVEEMSIRLDQTVAELKKQLKTL) form a coiled coil.

Abundantly expressed in testis, but is also present in several tissues at a much lower level.

The protein localises to the cytoplasm. Its subcellular location is the cytoskeleton. Its function is as follows. Acts as a regulator of tubulin stability. This is Tubulin-specific chaperone cofactor E-like protein (TBCEL) from Homo sapiens (Human).